A 165-amino-acid chain; its full sequence is Neurotrophin-3 (165 aa).

An N-terminal signal peptide occupies residues 1–3; sequence IQS. Positions 4 to 119 are excised as a propeptide; the sequence is TSMDQGSLSE…VLNQTSRRKR (116 aa). N-linked (GlcNAc...) asparagine glycosylation occurs at asparagine 112.

It belongs to the NGF-beta family.

It is found in the secreted. In terms of biological role, seems to promote the survival of visceral and proprioceptive sensory neurons. This Aspidites melanocephalus (Black-headed python) protein is Neurotrophin-3 (NTF3).